The primary structure comprises 146 residues: Bacterial hemoglobin (146 aa).

In terms of domain architecture, Globin spans 1 to 138; the sequence is MLDQQTINII…IADVFIQVEA (138 aa). Heme b contacts are provided by Gln-53 and His-85.

It belongs to the globin family. Homodimer.

Functionally, this protein functions as a terminal oxidase. The sequence is that of Bacterial hemoglobin (vhb) from Vitreoscilla stercoraria.